A 150-amino-acid chain; its full sequence is MTIADNKKAFFDYFIEERYEAGIVLEGWEVKAIRAGRVQIKEGYVVVRDAEMFLIGAHISPLQSASTHVNPDPVRTRKLLLKADEIKKLIGKVEQRGYTLVPLNLHYTRGRVKCEIGLAKGKKQFDKRETEKQRDWQREKARIMKGDAKD.

A disordered region spans residues 127 to 150 (KRETEKQRDWQREKARIMKGDAKD).

It belongs to the SmpB family.

The protein resides in the cytoplasm. In terms of biological role, required for rescue of stalled ribosomes mediated by trans-translation. Binds to transfer-messenger RNA (tmRNA), required for stable association of tmRNA with ribosomes. tmRNA and SmpB together mimic tRNA shape, replacing the anticodon stem-loop with SmpB. tmRNA is encoded by the ssrA gene; the 2 termini fold to resemble tRNA(Ala) and it encodes a 'tag peptide', a short internal open reading frame. During trans-translation Ala-aminoacylated tmRNA acts like a tRNA, entering the A-site of stalled ribosomes, displacing the stalled mRNA. The ribosome then switches to translate the ORF on the tmRNA; the nascent peptide is terminated with the 'tag peptide' encoded by the tmRNA and targeted for degradation. The ribosome is freed to recommence translation, which seems to be the essential function of trans-translation. In Cupriavidus necator (strain ATCC 17699 / DSM 428 / KCTC 22496 / NCIMB 10442 / H16 / Stanier 337) (Ralstonia eutropha), this protein is SsrA-binding protein.